A 472-amino-acid polypeptide reads, in one-letter code: Cysteine--tRNA ligase (472 aa).

Residue C28 coordinates Zn(2+). A 'HIGH' region motif is present at residues 30–40; sequence PTVYDYTHIGH. Zn(2+) contacts are provided by C207, H232, and E236. The short motif at 264–268 is the 'KMSKS' region element; it reads KMSKS. An ATP-binding site is contributed by K267.

This sequence belongs to the class-I aminoacyl-tRNA synthetase family. Zn(2+) serves as cofactor.

The protein localises to the cytoplasm. The enzyme catalyses tRNA(Cys) + L-cysteine + ATP = L-cysteinyl-tRNA(Cys) + AMP + diphosphate. The chain is Cysteine--tRNA ligase (cysS) from Aeropyrum pernix (strain ATCC 700893 / DSM 11879 / JCM 9820 / NBRC 100138 / K1).